The primary structure comprises 295 residues: Bifunctional protein FolD 1 (295 aa).

Residues G165–S167, I190, and I231 contribute to the NADP(+) site.

It belongs to the tetrahydrofolate dehydrogenase/cyclohydrolase family. Homodimer.

The catalysed reaction is (6R)-5,10-methylene-5,6,7,8-tetrahydrofolate + NADP(+) = (6R)-5,10-methenyltetrahydrofolate + NADPH. The enzyme catalyses (6R)-5,10-methenyltetrahydrofolate + H2O = (6R)-10-formyltetrahydrofolate + H(+). It participates in one-carbon metabolism; tetrahydrofolate interconversion. In terms of biological role, catalyzes the oxidation of 5,10-methylenetetrahydrofolate to 5,10-methenyltetrahydrofolate and then the hydrolysis of 5,10-methenyltetrahydrofolate to 10-formyltetrahydrofolate. This chain is Bifunctional protein FolD 1, found in Rhizorhabdus wittichii (strain DSM 6014 / CCUG 31198 / JCM 15750 / NBRC 105917 / EY 4224 / RW1) (Sphingomonas wittichii).